A 132-amino-acid polypeptide reads, in one-letter code: Replication enhancer protein (132 aa).

Belongs to the geminiviridae replication enhancer protein family. Homooligomer. Interacts with the replication-associated protein (REP). Interacts with host proliferating cell nuclear antigen (PCNA). Interacts with host retinoblastoma-related protein 1 (RBR1), and may thereby deregulate the host cell cycle. Oligomerization and interaction with PCNA are necessary for optimal replication enhancement.

Its function is as follows. Increases viral DNA accumulation. Enhances infectivity and symptom expression. This is Replication enhancer protein from Tomato mottle virus (isolate Florida) (ToMoV).